We begin with the raw amino-acid sequence, 301 residues long: Fatty acid elongase 3 (301 aa).

A run of 7 helical transmembrane segments spans residues 31 to 51, 64 to 84, 122 to 142, 161 to 181, 187 to 207, 219 to 239, and 257 to 277; these read VPYI…KSIM, IVWN…TVPY, ALAD…LFAL, VIFL…FAYV, GLWF…YYFV, FAPI…IVVC, and FSLH…SQLF. The short motif at 165 to 169 is the HxxHH motif element; that stretch reads HWYHH. Histidine 168 (nucleophile) is an active-site residue.

It belongs to the ELO family.

The protein resides in the endoplasmic reticulum membrane. The catalysed reaction is an acyl-CoA + malonyl-CoA + H(+) = a 3-oxoacyl-CoA + CO2 + CoA. It functions in the pathway lipid metabolism; fatty acid biosynthesis. Involved in the synthesis of fatty acids. Elongates C14 fatty acids to C18. In Trypanosoma brucei brucei (strain 927/4 GUTat10.1), this protein is Fatty acid elongase 3.